The following is a 448-amino-acid chain: Probable glycine dehydrogenase (decarboxylating) subunit 1 (448 aa).

The protein belongs to the GcvP family. N-terminal subunit subfamily. In terms of assembly, the glycine cleavage system is composed of four proteins: P, T, L and H. In this organism, the P 'protein' is a heterodimer of two subunits.

It carries out the reaction N(6)-[(R)-lipoyl]-L-lysyl-[glycine-cleavage complex H protein] + glycine + H(+) = N(6)-[(R)-S(8)-aminomethyldihydrolipoyl]-L-lysyl-[glycine-cleavage complex H protein] + CO2. Its function is as follows. The glycine cleavage system catalyzes the degradation of glycine. The P protein binds the alpha-amino group of glycine through its pyridoxal phosphate cofactor; CO(2) is released and the remaining methylamine moiety is then transferred to the lipoamide cofactor of the H protein. This Bacillus velezensis (strain DSM 23117 / BGSC 10A6 / LMG 26770 / FZB42) (Bacillus amyloliquefaciens subsp. plantarum) protein is Probable glycine dehydrogenase (decarboxylating) subunit 1.